We begin with the raw amino-acid sequence, 308 residues long: Acetyl-coenzyme A carboxylase carboxyl transferase subunit beta (308 aa).

The CoA carboxyltransferase N-terminal domain maps to 46-308 (LWVKCPDTGE…LMMGRGLKAA (263 aa)).

It belongs to the AccD/PCCB family. As to quaternary structure, acetyl-CoA carboxylase is a heterohexamer composed of biotin carboxyl carrier protein (AccB), biotin carboxylase (AccC) and two subunits each of ACCase subunit alpha (AccA) and ACCase subunit beta (AccD).

It is found in the cytoplasm. The enzyme catalyses N(6)-carboxybiotinyl-L-lysyl-[protein] + acetyl-CoA = N(6)-biotinyl-L-lysyl-[protein] + malonyl-CoA. It functions in the pathway lipid metabolism; malonyl-CoA biosynthesis; malonyl-CoA from acetyl-CoA: step 1/1. Its function is as follows. Component of the acetyl coenzyme A carboxylase (ACC) complex. Biotin carboxylase (BC) catalyzes the carboxylation of biotin on its carrier protein (BCCP) and then the CO(2) group is transferred by the transcarboxylase to acetyl-CoA to form malonyl-CoA. The polypeptide is Acetyl-coenzyme A carboxylase carboxyl transferase subunit beta (Caulobacter sp. (strain K31)).